The chain runs to 354 residues: MIETDKLAAERIIAATPVSPNEEAFERALRPRQLEEYVGQEKVRGQLEIFIEAAKRRSESLDHVLLFGPPGLGKTTLAHIIAREMGVNLRQTSGPVLERAGDLAALLTNLEANDVLFIDEIHRLSPVVEEILYPALEDYQIDIMIGEGPAARSVKLDLQPFTLVGATTRAGMLTNPLRDRFGIVARLEFYNAEELARIVTRSASLLNAQIHPDGAFEIAKRARGTPRIANRLLRRVRDFAEVKADGNITAQVADAALKMLDVDAVGFDLMDRKLLEAILHKFDGGPVGVDNLAAAIGEERDTIEDVLEPYLIQQGFLQRTPRGRVATLLTYRHFGLAAPDSSSGLPGLWDSAAT.

The interval 4–190 is large ATPase domain (RuvB-L); that stretch reads TDKLAAERII…FGIVARLEFY (187 aa). ATP is bound by residues Leu-29, Arg-30, Gly-71, Lys-74, Thr-75, Thr-76, 137–139, Arg-180, Tyr-190, and Arg-227; that span reads EDY. Thr-75 contacts Mg(2+). The segment at 191-261 is small ATPAse domain (RuvB-S); that stretch reads NAEELARIVT…VADAALKMLD (71 aa). Positions 264–354 are head domain (RuvB-H); it reads AVGFDLMDRK…LPGLWDSAAT (91 aa). Arg-300, Arg-319, and Arg-324 together coordinate DNA.

Belongs to the RuvB family. In terms of assembly, homohexamer. Forms an RuvA(8)-RuvB(12)-Holliday junction (HJ) complex. HJ DNA is sandwiched between 2 RuvA tetramers; dsDNA enters through RuvA and exits via RuvB. An RuvB hexamer assembles on each DNA strand where it exits the tetramer. Each RuvB hexamer is contacted by two RuvA subunits (via domain III) on 2 adjacent RuvB subunits; this complex drives branch migration. In the full resolvosome a probable DNA-RuvA(4)-RuvB(12)-RuvC(2) complex forms which resolves the HJ.

The protein localises to the cytoplasm. The catalysed reaction is ATP + H2O = ADP + phosphate + H(+). Functionally, the RuvA-RuvB-RuvC complex processes Holliday junction (HJ) DNA during genetic recombination and DNA repair, while the RuvA-RuvB complex plays an important role in the rescue of blocked DNA replication forks via replication fork reversal (RFR). RuvA specifically binds to HJ cruciform DNA, conferring on it an open structure. The RuvB hexamer acts as an ATP-dependent pump, pulling dsDNA into and through the RuvAB complex. RuvB forms 2 homohexamers on either side of HJ DNA bound by 1 or 2 RuvA tetramers; 4 subunits per hexamer contact DNA at a time. Coordinated motions by a converter formed by DNA-disengaged RuvB subunits stimulates ATP hydrolysis and nucleotide exchange. Immobilization of the converter enables RuvB to convert the ATP-contained energy into a lever motion, pulling 2 nucleotides of DNA out of the RuvA tetramer per ATP hydrolyzed, thus driving DNA branch migration. The RuvB motors rotate together with the DNA substrate, which together with the progressing nucleotide cycle form the mechanistic basis for DNA recombination by continuous HJ branch migration. Branch migration allows RuvC to scan DNA until it finds its consensus sequence, where it cleaves and resolves cruciform DNA. This is Holliday junction branch migration complex subunit RuvB from Paraburkholderia phytofirmans (strain DSM 17436 / LMG 22146 / PsJN) (Burkholderia phytofirmans).